The chain runs to 544 residues: Neurofilament light polypeptide (544 aa).

The residue at position 2 (S2) is an N-acetylserine. The segment at 2 to 87 (SSYSYDPYYT…KIVRTQEKVQ (86 aa)) is head. Residues 84 to 394 (EKVQLQDLND…KLLEGEETRL (311 aa)) form the IF rod domain. A coil 1A region spans residues 88–119 (LQDLNDRFANFIERVHELEQRNKVLEAELLLL). Residues 120-132 (RQKHNEPSRLRDM) form a linker 1 region. The tract at residues 133–228 (YEKEVRDVRL…KVHEEELSQL (96 aa)) is coil 1B. Residues 229–246 (QSQVQYAQVSLEVEVAKP) are linker 12. The coil 2A stretch occupies residues 247-265 (DLSSALRDIRGQYEKLAAK). A linker 2 region spans residues 266–274 (NMQSAEEWF). The tract at residues 275–390 (KSRFTVLTQS…AAYRKLLEGE (116 aa)) is coil 2B. The interval 391 to 435 (ETRLSFSGVGAITSGYTQSAPVFGRSAYSLQSSSYMTSRAFPTYY) is tail, subdomain A. The tract at residues 391 to 544 (ETRLSFSGVG…EESEKKEKKK (154 aa)) is tail. Residues 436–544 (SSHVQEEQLD…EESEKKEKKK (109 aa)) are tail, subdomain B (acidic). Positions 450-544 (IESSRAEEAK…EESEKKEKKK (95 aa)) are disordered. The segment covering 451 to 462 (ESSRAEEAKAEA) has biased composition (basic and acidic residues). Acidic residues predominate over residues 463–525 (PEEEEEEAAE…EAEGDGEEEG (63 aa)). Over residues 526–544 (ESKGDEAAEEESEKKEKKK) the composition is skewed to basic and acidic residues.

Belongs to the intermediate filament family. As to quaternary structure, forms homodimers (in vitro).

It is found in the cell projection. The protein localises to the axon. The protein resides in the cytoplasm. It localises to the cytoskeleton. Its function is as follows. Neurofilaments usually contain three intermediate filament proteins: NEFL, NEFM, and NEFH which are involved in the maintenance of neuronal caliber. May additionally cooperate with other neuronal intermediate filament proteins to form neuronal filamentous networks. The protein is Neurofilament light polypeptide (nefl) of Xenopus laevis (African clawed frog).